A 57-amino-acid chain; its full sequence is Small ribosomal subunit protein bS21 (57 aa).

This sequence belongs to the bacterial ribosomal protein bS21 family.

The polypeptide is Small ribosomal subunit protein bS21 (Bacillus anthracis (strain A0248)).